Consider the following 150-residue polypeptide: UPF0506 protein SJCHGC09643 (150 aa).

The first 18 residues, 1 to 18 (MNTCIQLLILCLVTVINS), serve as a signal peptide directing secretion. N-linked (GlcNAc...) asparagine glycosylation is found at N20, N32, N48, and N110. Intrachain disulfides connect C116-C130, C123-C134, and C129-C139.

It belongs to the UPF0506 family.

Its subcellular location is the secreted. The sequence is that of UPF0506 protein SJCHGC09643 from Schistosoma japonicum (Blood fluke).